Reading from the N-terminus, the 208-residue chain is GTP cyclohydrolase 1 (208 aa).

Positions 89, 92, and 163 each coordinate Zn(2+).

Belongs to the GTP cyclohydrolase I family. As to quaternary structure, homomer.

The enzyme catalyses GTP + H2O = 7,8-dihydroneopterin 3'-triphosphate + formate + H(+). Its pathway is cofactor biosynthesis; 7,8-dihydroneopterin triphosphate biosynthesis; 7,8-dihydroneopterin triphosphate from GTP: step 1/1. The chain is GTP cyclohydrolase 1 from Saccharolobus islandicus (strain L.S.2.15 / Lassen #1) (Sulfolobus islandicus).